Consider the following 444-residue polypeptide: P2X purinoceptor 5 (444 aa).

The Cytoplasmic portion of the chain corresponds to 1–30; sequence MGQAGCKGLCLSLFDYKTEKYVIAKNKKVG. A helical transmembrane segment spans residues 31-51; the sequence is LLYRLLQASILAYLVVWVFLI. Residues 52–319 lie on the Extracellular side of the membrane; it reads KKGYQDVDTS…RTLMKAYGIR (268 aa). N-linked (GlcNAc...) asparagine glycosylation is present at Asn77. 3 cysteine pairs are disulfide-bonded: Cys118–Cys169, Cys129–Cys152, and Cys135–Cys163. Asn202 is a glycosylation site (N-linked (GlcNAc...) asparagine). Disulfide bonds link Cys220–Cys229 and Cys263–Cys272. A helical membrane pass occupies residues 320-362; it reads FDVMVNGKAGKFSIIPTIINVGSGVALMGAGAFFCDLVLIYLI. Residues 363 to 444 lie on the Cytoplasmic side of the membrane; the sequence is KKREFYRDKK…PQLLEPHRST (82 aa). Positions 378–444 are disordered; it reads GLEDSSQEAE…PQLLEPHRST (67 aa).

It belongs to the P2X receptor family. In terms of assembly, functional P2XRs are organized as homomeric and heteromeric trimers. Homotrimer. Forms heterotrimer with P2RX1. In terms of tissue distribution, expressed at high levels in brain and immune system.

The protein localises to the cell membrane. The catalysed reaction is Na(+)(in) = Na(+)(out). It catalyses the reaction Ca(2+)(in) = Ca(2+)(out). The enzyme catalyses chloride(in) = chloride(out). With respect to regulation, activated by ATP. Slowly desensitizing. Sensitive to the ATP agonist alpha/beta-methylene-ATP. ATP-gated nonselective transmembrane cation channel permeable to potassium, sodium and calcium. Unlike other P2RX receptors, the P2X5 receptor is also permeable to chloride. May play a supporting role in the inflammatory response. Its function is as follows. Non-functional. The chain is P2X purinoceptor 5 from Homo sapiens (Human).